The following is a 376-amino-acid chain: Ribosomal RNA large subunit methyltransferase G (376 aa).

This sequence belongs to the methyltransferase superfamily. RlmG family.

It localises to the cytoplasm. The catalysed reaction is guanosine(1835) in 23S rRNA + S-adenosyl-L-methionine = N(2)-methylguanosine(1835) in 23S rRNA + S-adenosyl-L-homocysteine + H(+). Specifically methylates the guanine in position 1835 (m2G1835) of 23S rRNA. This is Ribosomal RNA large subunit methyltransferase G from Klebsiella pneumoniae subsp. pneumoniae (strain ATCC 700721 / MGH 78578).